Here is a 444-residue protein sequence, read N- to C-terminus: Methylenetetrahydrofolate--tRNA-(uracil-5-)-methyltransferase TrmFO (444 aa).

FAD is bound at residue 10-15 (GAGLAG).

It belongs to the MnmG family. TrmFO subfamily. FAD is required as a cofactor.

It is found in the cytoplasm. It carries out the reaction uridine(54) in tRNA + (6R)-5,10-methylene-5,6,7,8-tetrahydrofolate + NADH + H(+) = 5-methyluridine(54) in tRNA + (6S)-5,6,7,8-tetrahydrofolate + NAD(+). It catalyses the reaction uridine(54) in tRNA + (6R)-5,10-methylene-5,6,7,8-tetrahydrofolate + NADPH + H(+) = 5-methyluridine(54) in tRNA + (6S)-5,6,7,8-tetrahydrofolate + NADP(+). Its function is as follows. Catalyzes the folate-dependent formation of 5-methyl-uridine at position 54 (M-5-U54) in all tRNAs. The chain is Methylenetetrahydrofolate--tRNA-(uracil-5-)-methyltransferase TrmFO from Streptococcus agalactiae serotype Ia (strain ATCC 27591 / A909 / CDC SS700).